We begin with the raw amino-acid sequence, 66 residues long: Large ribosomal subunit protein bL33 (66 aa).

The protein belongs to the bacterial ribosomal protein bL33 family.

The protein is Large ribosomal subunit protein bL33 of Wolbachia pipientis wMel.